The primary structure comprises 394 residues: Elongation factor Tu 1 (394 aa).

Residues 10-204 form the tr-type G domain; sequence KPHVNVGTIG…ALDSYIPEPE (195 aa). The interval 19 to 26 is G1; that stretch reads GHVDHGKT. 19–26 is a binding site for GTP; the sequence is GHVDHGKT. Thr-26 provides a ligand contact to Mg(2+). A G2 region spans residues 60-64; sequence GITIS. The segment at 81–84 is G3; sequence DCPG. GTP-binding positions include 81 to 85 and 136 to 139; these read DCPGH and NKCD. The segment at 136 to 139 is G4; sequence NKCD. The tract at residues 174–176 is G5; sequence SAL.

Belongs to the TRAFAC class translation factor GTPase superfamily. Classic translation factor GTPase family. EF-Tu/EF-1A subfamily. Monomer.

The protein resides in the cytoplasm. The enzyme catalyses GTP + H2O = GDP + phosphate + H(+). Its function is as follows. GTP hydrolase that promotes the GTP-dependent binding of aminoacyl-tRNA to the A-site of ribosomes during protein biosynthesis. This chain is Elongation factor Tu 1, found in Photorhabdus laumondii subsp. laumondii (strain DSM 15139 / CIP 105565 / TT01) (Photorhabdus luminescens subsp. laumondii).